Here is a 121-residue protein sequence, read N- to C-terminus: Holo-[acyl-carrier-protein] synthase (121 aa).

Positions 8 and 58 each coordinate Mg(2+).

This sequence belongs to the P-Pant transferase superfamily. AcpS family. Mg(2+) serves as cofactor.

The protein resides in the cytoplasm. The catalysed reaction is apo-[ACP] + CoA = holo-[ACP] + adenosine 3',5'-bisphosphate + H(+). Its function is as follows. Transfers the 4'-phosphopantetheine moiety from coenzyme A to a Ser of acyl-carrier-protein. This chain is Holo-[acyl-carrier-protein] synthase, found in Bacillus velezensis (strain DSM 23117 / BGSC 10A6 / LMG 26770 / FZB42) (Bacillus amyloliquefaciens subsp. plantarum).